The sequence spans 150 residues: Nucleoside diphosphate kinase (150 aa).

Residues K10, F58, R86, T92, R103, and N113 each contribute to the ATP site. The Pros-phosphohistidine intermediate role is filled by H116.

The protein belongs to the NDK family. Homohexamer. Mg(2+) is required as a cofactor.

The enzyme catalyses a 2'-deoxyribonucleoside 5'-diphosphate + ATP = a 2'-deoxyribonucleoside 5'-triphosphate + ADP. The catalysed reaction is a ribonucleoside 5'-diphosphate + ATP = a ribonucleoside 5'-triphosphate + ADP. In terms of biological role, major role in the synthesis of nucleoside triphosphates other than ATP. The ATP gamma phosphate is transferred to the NDP beta phosphate via a ping-pong mechanism, using a phosphorylated active-site intermediate. The protein is Nucleoside diphosphate kinase (awd) of Drosophila yakuba (Fruit fly).